Here is a 561-residue protein sequence, read N- to C-terminus: Phosphoinositide phospholipase C 1 (561 aa).

Residues 21-54 enclose the EF-hand domain; it reads EPPEEIKNLFHDYSQDDRMSADEMLRFVIQVQGE. A PI-PLC X-box domain is found at 105–249; the sequence is QDMNQPLSHY…LKNKILISTK (145 aa). Residues His-120 and His-166 contribute to the active site. Residues 256–266 show a composition bias toward polar residues; it reads QTQISKGSTTD. A disordered region spans residues 256–285; sequence QTQISKGSTTDESTRAKKISDAEEQVQEED. A compositionally biased stretch (basic and acidic residues) spans 267–276; the sequence is ESTRAKKISD. Residues 294–410 enclose the PI-PLC Y-box domain; sequence RDLISIHAGN…GYVKKPDVLL (117 aa). In terms of domain architecture, C2 spans 414 to 541; that stretch reads PEGEIFDPCS…PGIRAVRLHD (128 aa). Ca(2+) is bound by residues Asp-452, Asp-458, Asp-510, Asp-512, and Asp-518.

Ca(2+) is required as a cofactor. In terms of tissue distribution, expressed in stems, leaves, roots, flowers and siliques. Predominant in the vascular tissues of roots and leaves.

It localises to the cell membrane. It catalyses the reaction a 1,2-diacyl-sn-glycero-3-phospho-(1D-myo-inositol-4,5-bisphosphate) + H2O = 1D-myo-inositol 1,4,5-trisphosphate + a 1,2-diacyl-sn-glycerol + H(+). In terms of biological role, the production of the second messenger molecules diacylglycerol (DAG) and inositol 1,4,5-trisphosphate (IP3) is mediated by activated phosphatidylinositol-specific phospholipase C enzymes. Required for secondary responses to abscisic acid signals. This is Phosphoinositide phospholipase C 1 (PLC1) from Arabidopsis thaliana (Mouse-ear cress).